The sequence spans 126 residues: Phosphoribosyl-AMP cyclohydrolase (126 aa).

A Mg(2+)-binding site is contributed by D76. Residue C77 coordinates Zn(2+). D78 and D80 together coordinate Mg(2+). Zn(2+)-binding residues include C94 and C101.

It belongs to the PRA-CH family. As to quaternary structure, homodimer. Mg(2+) is required as a cofactor. The cofactor is Zn(2+).

The protein localises to the cytoplasm. The enzyme catalyses 1-(5-phospho-beta-D-ribosyl)-5'-AMP + H2O = 1-(5-phospho-beta-D-ribosyl)-5-[(5-phospho-beta-D-ribosylamino)methylideneamino]imidazole-4-carboxamide. It functions in the pathway amino-acid biosynthesis; L-histidine biosynthesis; L-histidine from 5-phospho-alpha-D-ribose 1-diphosphate: step 3/9. In terms of biological role, catalyzes the hydrolysis of the adenine ring of phosphoribosyl-AMP. The polypeptide is Phosphoribosyl-AMP cyclohydrolase (Ruthia magnifica subsp. Calyptogena magnifica).